A 108-amino-acid polypeptide reads, in one-letter code: ATPase inhibitor, mitochondrial (108 aa).

The N-terminal 25 residues, 1 to 25 (MAATALAVRSRIGAWSVWAMQSRGF), are a transit peptide targeting the mitochondrion. The disordered stretch occupies residues 25–48 (FSSDTPEGVRSGAGAVRDAGGAFG). The N-terminal inhibitory region stretch occupies residues 26-52 (SSDTPEGVRSGAGAVRDAGGAFGKKEQ). The stretch at 69–108 (ALKKHHENEISHHVKEIERLQKEIERHKQSIKKLKNDDDD) forms a coiled coil. An antiparallel alpha-helical coiled coil region region spans residues 74–106 (HENEISHHVKEIERLQKEIERHKQSIKKLKNDD). Lysine 103 carries the post-translational modification N6-succinyllysine.

This sequence belongs to the ATPase inhibitor family. In terms of assembly, homodimer; represents the active form and is present at a pH value below 6.5. Homotetramer; represents the inactive form and is present at a pH value above 7.0.

The protein localises to the mitochondrion. In terms of biological role, endogenous F(1)F(o)-ATPase inhibitor limiting ATP depletion when the mitochondrial membrane potential falls below a threshold and the F(1)F(o)-ATP synthase starts hydrolyzing ATP to pump protons out of the mitochondrial matrix. Required to avoid the consumption of cellular ATP when the F(1)F(o)-ATP synthase enzyme acts as an ATP hydrolase. Indirectly acts as a regulator of heme synthesis in erythroid tissues: regulates heme synthesis by modulating the mitochondrial pH and redox potential, allowing FECH to efficiently catalyze the incorporation of iron into protoporphyrin IX to produce heme. This is ATPase inhibitor, mitochondrial from Sus scrofa (Pig).